The primary structure comprises 472 residues: N-succinylglutamate 5-semialdehyde dehydrogenase 1 (472 aa).

209 to 214 (GGVQAG) lines the NAD(+) pocket. Catalysis depends on residues Glu-232 and Cys-266.

This sequence belongs to the aldehyde dehydrogenase family. AstD subfamily.

It carries out the reaction N-succinyl-L-glutamate 5-semialdehyde + NAD(+) + H2O = N-succinyl-L-glutamate + NADH + 2 H(+). Its pathway is amino-acid degradation; L-arginine degradation via AST pathway; L-glutamate and succinate from L-arginine: step 4/5. Its function is as follows. Catalyzes the NAD-dependent reduction of succinylglutamate semialdehyde into succinylglutamate. The chain is N-succinylglutamate 5-semialdehyde dehydrogenase 1 from Caulobacter vibrioides (strain ATCC 19089 / CIP 103742 / CB 15) (Caulobacter crescentus).